The sequence spans 808 residues: Protein translocase subunit SecA (808 aa).

Residues Gln87, 105-109 (GEGKT), and Asp493 each bind ATP.

The protein belongs to the SecA family. Monomer and homodimer. Part of the essential Sec protein translocation apparatus which comprises SecA, SecYEG and auxiliary proteins SecDF. Other proteins may also be involved.

The protein localises to the cell membrane. It localises to the cytoplasm. It catalyses the reaction ATP + H2O + cellular proteinSide 1 = ADP + phosphate + cellular proteinSide 2.. In terms of biological role, part of the Sec protein translocase complex. Interacts with the SecYEG preprotein conducting channel. Has a central role in coupling the hydrolysis of ATP to the transfer of proteins into and across the cell membrane, serving as an ATP-driven molecular motor driving the stepwise translocation of polypeptide chains across the membrane. This is Protein translocase subunit SecA from Mycoplasma pneumoniae (strain ATCC 29342 / M129 / Subtype 1) (Mycoplasmoides pneumoniae).